The primary structure comprises 602 residues: Elongation factor 4 (602 aa).

A tr-type G domain is found at 7–189 (KYIRNFSIVA…AIVNKVPAPD (183 aa)). GTP-binding positions include 19–24 (DHGKST) and 136–139 (NKID).

The protein belongs to the TRAFAC class translation factor GTPase superfamily. Classic translation factor GTPase family. LepA subfamily.

Its subcellular location is the cell membrane. It carries out the reaction GTP + H2O = GDP + phosphate + H(+). Functionally, required for accurate and efficient protein synthesis under certain stress conditions. May act as a fidelity factor of the translation reaction, by catalyzing a one-codon backward translocation of tRNAs on improperly translocated ribosomes. Back-translocation proceeds from a post-translocation (POST) complex to a pre-translocation (PRE) complex, thus giving elongation factor G a second chance to translocate the tRNAs correctly. Binds to ribosomes in a GTP-dependent manner. This is Elongation factor 4 from Clostridium botulinum (strain Kyoto / Type A2).